Here is a 152-residue protein sequence, read N- to C-terminus: D-aminoacyl-tRNA deacylase (152 aa).

Positions 142–143 (GP) match the Gly-cisPro motif, important for rejection of L-amino acids motif.

It belongs to the DTD family. In terms of assembly, homodimer.

Its subcellular location is the cytoplasm. The enzyme catalyses glycyl-tRNA(Ala) + H2O = tRNA(Ala) + glycine + H(+). The catalysed reaction is a D-aminoacyl-tRNA + H2O = a tRNA + a D-alpha-amino acid + H(+). Its function is as follows. An aminoacyl-tRNA editing enzyme that deacylates mischarged D-aminoacyl-tRNAs. Also deacylates mischarged glycyl-tRNA(Ala), protecting cells against glycine mischarging by AlaRS. Acts via tRNA-based rather than protein-based catalysis; rejects L-amino acids rather than detecting D-amino acids in the active site. By recycling D-aminoacyl-tRNA to D-amino acids and free tRNA molecules, this enzyme counteracts the toxicity associated with the formation of D-aminoacyl-tRNA entities in vivo and helps enforce protein L-homochirality. The protein is D-aminoacyl-tRNA deacylase of Burkholderia multivorans (strain ATCC 17616 / 249).